Reading from the N-terminus, the 380-residue chain is Cell division protein FtsZ (380 aa).

GTP is bound by residues 27 to 31 (GAGNN), 119 to 121 (GTG), Glu150, and Asn189.

Belongs to the FtsZ family. As to quaternary structure, homodimer. Polymerizes to form a dynamic ring structure in a strictly GTP-dependent manner. Interacts directly with several other division proteins.

The protein localises to the cytoplasm. In terms of biological role, essential cell division protein that forms a contractile ring structure (Z ring) at the future cell division site. The regulation of the ring assembly controls the timing and the location of cell division. One of the functions of the FtsZ ring is to recruit other cell division proteins to the septum to produce a new cell wall between the dividing cells. Binds GTP and shows GTPase activity. The polypeptide is Cell division protein FtsZ (Mycoplasma pneumoniae (strain ATCC 29342 / M129 / Subtype 1) (Mycoplasmoides pneumoniae)).